The chain runs to 494 residues: ATP synthase subunit beta, chloroplastic (494 aa).

An ATP-binding site is contributed by 172-179 (GGAGVGKT).

This sequence belongs to the ATPase alpha/beta chains family. In terms of assembly, F-type ATPases have 2 components, CF(1) - the catalytic core - and CF(0) - the membrane proton channel. CF(1) has five subunits: alpha(3), beta(3), gamma(1), delta(1), epsilon(1). CF(0) has four main subunits: a(1), b(1), b'(1) and c(9-12).

The protein localises to the plastid. It is found in the chloroplast thylakoid membrane. The enzyme catalyses ATP + H2O + 4 H(+)(in) = ADP + phosphate + 5 H(+)(out). Produces ATP from ADP in the presence of a proton gradient across the membrane. The catalytic sites are hosted primarily by the beta subunits. The polypeptide is ATP synthase subunit beta, chloroplastic (Physcomitrium patens (Spreading-leaved earth moss)).